The chain runs to 158 residues: Transcription elongation factor GreA (158 aa).

The stretch at 47 to 74 (AEYHAAKEEQSHNEGRIAELEDKLARAD) forms a coiled coil.

Belongs to the GreA/GreB family.

Its function is as follows. Necessary for efficient RNA polymerase transcription elongation past template-encoded arresting sites. The arresting sites in DNA have the property of trapping a certain fraction of elongating RNA polymerases that pass through, resulting in locked ternary complexes. Cleavage of the nascent transcript by cleavage factors such as GreA or GreB allows the resumption of elongation from the new 3'terminus. GreA releases sequences of 2 to 3 nucleotides. In Nitrobacter winogradskyi (strain ATCC 25391 / DSM 10237 / CIP 104748 / NCIMB 11846 / Nb-255), this protein is Transcription elongation factor GreA.